We begin with the raw amino-acid sequence, 274 residues long: MAHYFVGDVQGCFAELQRLLAKVDFNPSCDELWAVGDLVARGPDSLATLRYFQSLGDAGKTVLGNHDLHLLALHGKLKRDKPSDNLTPLLNAPDIASLIDWLRQQPLMRELPEHKIIMTHAGVPPQWSLEVLRQESQLVSQALKQSDYLDALISQMYSDTAERWEPSAIGINRLRFCINALTRMRYLYVDGHLDFDCKQPPEDCTNPQLRPWFEFTSALRQSHTLVFGHWAALMGKVNDPKLKALDTGCCWGEYLTLWHLEKDQKITQKRLKKG.

The protein belongs to the Ap4A hydrolase family.

The catalysed reaction is P(1),P(4)-bis(5'-adenosyl) tetraphosphate + H2O = 2 ADP + 2 H(+). Functionally, hydrolyzes diadenosine 5',5'''-P1,P4-tetraphosphate to yield ADP. The protein is Bis(5'-nucleosyl)-tetraphosphatase, symmetrical of Shewanella sp. (strain ANA-3).